The sequence spans 229 residues: Prolactin (229 aa).

The first 30 residues, 1–30 (MDSKVSSQKGSRLLLLLVVSNLLLCQGVVS), serve as a signal peptide directing secretion. A disulfide bond links Cys34 and Cys41. Phosphoserine is present on residues Ser56, Ser64, and Ser120. Disulfide bonds link Cys88–Cys204 and Cys221–Cys229.

This sequence belongs to the somatotropin/prolactin family. Interacts with PRLR.

The protein resides in the secreted. Its function is as follows. Prolactin acts primarily on the mammary gland by promoting lactation. This Cervus elaphus (Red deer) protein is Prolactin (PRL).